We begin with the raw amino-acid sequence, 310 residues long: Pyrimidine-specific ribonucleoside hydrolase RihA (310 aa).

The active site involves histidine 240.

This sequence belongs to the IUNH family. RihA subfamily.

Functionally, hydrolyzes cytidine or uridine to ribose and cytosine or uracil, respectively. This is Pyrimidine-specific ribonucleoside hydrolase RihA from Photobacterium profundum (strain SS9).